A 221-amino-acid polypeptide reads, in one-letter code: tRNA (guanine-N(7)-)-methyltransferase (221 aa).

S-adenosyl-L-methionine-binding residues include glutamate 51, glutamate 76, aspartate 103, and aspartate 125. The active site involves aspartate 125. Substrate-binding residues include lysine 129 and aspartate 161.

This sequence belongs to the class I-like SAM-binding methyltransferase superfamily. TrmB family.

The catalysed reaction is guanosine(46) in tRNA + S-adenosyl-L-methionine = N(7)-methylguanosine(46) in tRNA + S-adenosyl-L-homocysteine. Its pathway is tRNA modification; N(7)-methylguanine-tRNA biosynthesis. In terms of biological role, catalyzes the formation of N(7)-methylguanine at position 46 (m7G46) in tRNA. The chain is tRNA (guanine-N(7)-)-methyltransferase from Wolbachia pipientis wMel.